The following is a 691-amino-acid chain: Zinc finger protein 770 (691 aa).

Residue Lys-11 forms a Glycyl lysine isopeptide (Lys-Gly) (interchain with G-Cter in SUMO2) linkage. C2H2-type zinc fingers lie at residues 27–49 (YVCN…YLIH), 55–77 (FECD…QLTH), and 81–103 (FKCS…QQLH). Residues Lys-112, Lys-121, and Lys-146 each participate in a glycyl lysine isopeptide (Lys-Gly) (interchain with G-Cter in SUMO2) cross-link. 3 consecutive C2H2-type zinc fingers follow at residues 160–182 (HACT…VLIH), 188–210 (FKCV…QLTH), and 216–238 (FQCC…KQIH). Residues 258 to 277 (PLPNKLNANQGGFENGEIGE) form a disordered region. Lys-262 is covalently cross-linked (Glycyl lysine isopeptide (Lys-Gly) (interchain with G-Cter in SUMO2)). A C2H2-type 7; degenerate zinc finger spans residues 294–318 (FQCPKCEKCFESEQILNEHSCFAAR). Residues Lys-420 and Lys-437 each participate in a glycyl lysine isopeptide (Lys-Gly) (interchain with G-Cter in SUMO2) cross-link. C2H2-type zinc fingers lie at residues 475 to 497 (CPCD…YLIH), 503 to 525 (FGCN…EQTH), 625 to 647 (YRCS…YLIH), and 653 to 675 (FECS…QLTH). Residue Lys-683 forms a Glycyl lysine isopeptide (Lys-Gly) (interchain with G-Cter in SUMO2) linkage.

It belongs to the krueppel C2H2-type zinc-finger protein family.

Its subcellular location is the nucleus. Its function is as follows. May be involved in transcriptional regulation. The sequence is that of Zinc finger protein 770 (ZNF770) from Homo sapiens (Human).